The sequence spans 266 residues: Sec-independent protein translocase protein TatC (266 aa).

Transmembrane regions (helical) follow at residues 28–48 (MIIATIILMNNKNVIFDYILF), 93–113 (FNIYVWTCFIGGFILSFPYIF), 134–154 (GIIMMVTFLFILGVLFGYFIL), 183–203 (LIMHSILSMGITFLFPIFIYF), 221–241 (HAFLILLILASAITPGDIFST), and 242–262 (IVVLIPLMILYQFSIYISFYV).

Belongs to the TatC family. As to quaternary structure, forms a complex with TatA.

Its subcellular location is the cell inner membrane. Its function is as follows. Part of the twin-arginine translocation (Tat) system that transports large folded proteins containing a characteristic twin-arginine motif in their signal peptide across membranes. This Blattabacterium sp. subsp. Periplaneta americana (strain BPLAN) (Periplaneta americana symbiotic bacterium) protein is Sec-independent protein translocase protein TatC.